We begin with the raw amino-acid sequence, 343 residues long: GTP 3',8-cyclase (343 aa).

A Radical SAM core domain is found at proline 19–proline 244. Arginine 28 is a GTP binding site. [4Fe-4S] cluster-binding residues include cysteine 35 and cysteine 39. S-adenosyl-L-methionine is bound at residue tyrosine 41. Cysteine 42 contacts [4Fe-4S] cluster. Arginine 77 is a binding site for GTP. S-adenosyl-L-methionine is bound at residue glycine 81. Threonine 111 is a binding site for GTP. An S-adenosyl-L-methionine-binding site is contributed by serine 135. Lysine 171 is a GTP binding site. Methionine 205 provides a ligand contact to S-adenosyl-L-methionine. 2 residues coordinate [4Fe-4S] cluster: cysteine 268 and cysteine 271. Arginine 273–arginine 275 is a binding site for GTP. Position 285 (cysteine 285) interacts with [4Fe-4S] cluster.

This sequence belongs to the radical SAM superfamily. MoaA family. Monomer and homodimer. The cofactor is [4Fe-4S] cluster.

The enzyme catalyses GTP + AH2 + S-adenosyl-L-methionine = (8S)-3',8-cyclo-7,8-dihydroguanosine 5'-triphosphate + 5'-deoxyadenosine + L-methionine + A + H(+). The protein operates within cofactor biosynthesis; molybdopterin biosynthesis. Its function is as follows. Catalyzes the cyclization of GTP to (8S)-3',8-cyclo-7,8-dihydroguanosine 5'-triphosphate. This is GTP 3',8-cyclase from Nitrobacter hamburgensis (strain DSM 10229 / NCIMB 13809 / X14).